Consider the following 250-residue polypeptide: ATP synthase subunit a (250 aa).

Transmembrane regions (helical) follow at residues 25 to 45 (VSFT…FFFL), 84 to 104 (VFFP…VIGL), 115 to 135 (IVVT…YGFY), 141 to 161 (FLHL…IVLI), 187 to 209 (ALKV…WLGA), and 223 to 243 (ELLV…IYLN).

The protein belongs to the ATPase A chain family. As to quaternary structure, F-type ATPases have 2 components, CF(1) - the catalytic core - and CF(0) - the membrane proton channel. CF(1) has five subunits: alpha(3), beta(3), gamma(1), delta(1), epsilon(1). CF(0) has three main subunits: a(1), b(2) and c(9-12). The alpha and beta chains form an alternating ring which encloses part of the gamma chain. CF(1) is attached to CF(0) by a central stalk formed by the gamma and epsilon chains, while a peripheral stalk is formed by the delta and b chains.

The protein resides in the cell inner membrane. Its function is as follows. Key component of the proton channel; it plays a direct role in the translocation of protons across the membrane. This Azorhizobium caulinodans (strain ATCC 43989 / DSM 5975 / JCM 20966 / LMG 6465 / NBRC 14845 / NCIMB 13405 / ORS 571) protein is ATP synthase subunit a.